Consider the following 478-residue polypeptide: Cytochrome c-552 (478 aa).

Positions 1–27 are cleaved as a signal peptide; it reads MKKQWTRRSAAAIAMVTTLLLSSHSFA. Residue His91 coordinates heme c. Cys119, Cys122, and Lys123 together coordinate heme. 6 residues coordinate heme c: Cys157, Cys160, His161, Cys206, Cys209, and His210. Ca(2+) is bound by residues Glu212, Tyr213, Lys258, and Gln260. Tyr213 contacts substrate. His261 contributes to the substrate binding site. Residues His272, Cys279, Cys282, His283, His298, Cys311, Cys314, His315, and His390 each contribute to the heme c site.

This sequence belongs to the cytochrome c-552 family. It depends on Ca(2+) as a cofactor. The cofactor is heme c.

It localises to the periplasm. It catalyses the reaction 6 Fe(III)-[cytochrome c] + NH4(+) + 2 H2O = 6 Fe(II)-[cytochrome c] + nitrite + 8 H(+). Its pathway is nitrogen metabolism; nitrate reduction (assimilation). Its function is as follows. Catalyzes the reduction of nitrite to ammonia, consuming six electrons in the process. The protein is Cytochrome c-552 of Aliivibrio fischeri (strain ATCC 700601 / ES114) (Vibrio fischeri).